Consider the following 321-residue polypeptide: Glucokinase (321 aa).

Position 9–14 (9–14 (ADIGGT)) interacts with ATP.

Belongs to the bacterial glucokinase family.

It is found in the cytoplasm. The enzyme catalyses D-glucose + ATP = D-glucose 6-phosphate + ADP + H(+). The polypeptide is Glucokinase (Saccharophagus degradans (strain 2-40 / ATCC 43961 / DSM 17024)).